Reading from the N-terminus, the 465-residue chain is Adenosine 3'-phospho 5'-phosphosulfate transporter 1 (465 aa).

The next 10 membrane-spanning stretches (helical) occupy residues 13-33 (LVIC…SDLL), 61-81 (FLKL…GFLI), 142-162 (AVQL…WGVL), 185-205 (QFLV…YLQW), 270-290 (SYEY…MSGS), 299-319 (VTTL…SFTA), 339-359 (GVNL…GGFM), 370-390 (KFVF…LFIY), 391-407 (HTID…IMTL), and 424-444 (ISLL…LRVY).

Belongs to the nucleotide-sugar transporter family. SLC35B subfamily. In terms of tissue distribution, expressed throughout embryogenesis. During oogenesis, it is expressed strongly in the nurse cells of the germline. Maternally expressed at the syncytial blastoderm stage. Zygotically expressed, from after germ-band elongation in the invaginating salivary gland placodes. Remains expressed predominantly in this tissue throughout embryogenesis, but low-level expression may also be present throughout the embryo.

It localises to the golgi apparatus membrane. Functionally, mediates the transport of adenosine 3'-phospho 5'-phosphosulfate (PAPS), from cytosol into Golgi. PAPS is a universal sulfuryl donor for sulfation events that take place in the Golgi. Required for the dorsoventral patterning, suggesting that it mediates the transport of the sulfate donor required for the sulfotransferase activity of pip (pipe). The protein is Adenosine 3'-phospho 5'-phosphosulfate transporter 1 (sll) of Drosophila melanogaster (Fruit fly).